Here is a 150-residue protein sequence, read N- to C-terminus: MRVLLQRCYEASVSVEEEVISEIAGGLCLLVGFTHKDTPETVDYMAKKIVGLRIFEDESEKMNISLAERGGAILSVSQFTLYADVSRGKRPSFTKSAPAEKAETLYDLFNQKLTEAGFIVETGVFGAMMDVKIVNHGPVTIMLDSDEMRK.

The Gly-cisPro motif, important for rejection of L-amino acids motif lies at 137-138; sequence GP.

The protein belongs to the DTD family. As to quaternary structure, homodimer.

The protein localises to the cytoplasm. The enzyme catalyses glycyl-tRNA(Ala) + H2O = tRNA(Ala) + glycine + H(+). The catalysed reaction is a D-aminoacyl-tRNA + H2O = a tRNA + a D-alpha-amino acid + H(+). Its function is as follows. An aminoacyl-tRNA editing enzyme that deacylates mischarged D-aminoacyl-tRNAs. Also deacylates mischarged glycyl-tRNA(Ala), protecting cells against glycine mischarging by AlaRS. Acts via tRNA-based rather than protein-based catalysis; rejects L-amino acids rather than detecting D-amino acids in the active site. By recycling D-aminoacyl-tRNA to D-amino acids and free tRNA molecules, this enzyme counteracts the toxicity associated with the formation of D-aminoacyl-tRNA entities in vivo and helps enforce protein L-homochirality. The sequence is that of D-aminoacyl-tRNA deacylase from Listeria monocytogenes serotype 4b (strain CLIP80459).